The chain runs to 96 residues: Small ribosomal subunit protein bS6 (96 aa).

It belongs to the bacterial ribosomal protein bS6 family.

Functionally, binds together with bS18 to 16S ribosomal RNA. This chain is Small ribosomal subunit protein bS6, found in Heliobacterium modesticaldum (strain ATCC 51547 / Ice1).